Consider the following 753-residue polypeptide: 5-methyltetrahydropteroyltriglutamate--homocysteine methyltransferase (753 aa).

5-methyltetrahydropteroyltri-L-glutamate is bound by residues 17 to 20 (RELK) and Lys-117. Residues 431 to 433 (IGS) and Glu-484 contribute to the L-homocysteine site. Residues 431-433 (IGS) and Glu-484 contribute to the L-methionine site. Residues 515-516 (RC) and Trp-561 each bind 5-methyltetrahydropteroyltri-L-glutamate. Asp-599 contacts L-homocysteine. Asp-599 contacts L-methionine. 5-methyltetrahydropteroyltri-L-glutamate is bound at residue Glu-605. Residues His-641, Cys-643, and Glu-665 each contribute to the Zn(2+) site. His-694 functions as the Proton donor in the catalytic mechanism. Cys-726 provides a ligand contact to Zn(2+).

This sequence belongs to the vitamin-B12 independent methionine synthase family. Zn(2+) serves as cofactor.

It catalyses the reaction 5-methyltetrahydropteroyltri-L-glutamate + L-homocysteine = tetrahydropteroyltri-L-glutamate + L-methionine. It functions in the pathway amino-acid biosynthesis; L-methionine biosynthesis via de novo pathway; L-methionine from L-homocysteine (MetE route): step 1/1. In terms of biological role, catalyzes the transfer of a methyl group from 5-methyltetrahydrofolate to homocysteine resulting in methionine formation. This chain is 5-methyltetrahydropteroyltriglutamate--homocysteine methyltransferase, found in Escherichia coli (strain ATCC 8739 / DSM 1576 / NBRC 3972 / NCIMB 8545 / WDCM 00012 / Crooks).